The following is a 439-amino-acid chain: ATP-dependent protease ATPase subunit HslU (439 aa).

ATP contacts are provided by residues Ile17, 59–64 (GVGKTE), Asp251, Glu317, and Arg389.

It belongs to the ClpX chaperone family. HslU subfamily. In terms of assembly, a double ring-shaped homohexamer of HslV is capped on each side by a ring-shaped HslU homohexamer. The assembly of the HslU/HslV complex is dependent on binding of ATP.

The protein resides in the cytoplasm. Its function is as follows. ATPase subunit of a proteasome-like degradation complex; this subunit has chaperone activity. The binding of ATP and its subsequent hydrolysis by HslU are essential for unfolding of protein substrates subsequently hydrolyzed by HslV. HslU recognizes the N-terminal part of its protein substrates and unfolds these before they are guided to HslV for hydrolysis. The sequence is that of ATP-dependent protease ATPase subunit HslU from Campylobacter jejuni (strain RM1221).